The sequence spans 750 residues: Photosystem I P700 chlorophyll a apoprotein A1 (750 aa).

A run of 8 helical transmembrane segments spans residues 70 to 93 (VFSA…FHGA), 156 to 179 (LYCT…FHYH), 195 to 219 (LNHH…HVSL), 291 to 309 (TAHH…GHMY), 346 to 369 (WHAQ…HHMY), 385 to 411 (LSLF…IFMV), 433 to 455 (AIVS…LYIH), and 531 to 549 (FLVH…LILL). Residues Cys-573 and Cys-582 each coordinate [4Fe-4S] cluster. 2 helical membrane-spanning segments follow: residues 589–610 (HVFL…HFSW) and 664–686 (LSAY…MFLF). His-675 serves as a coordination point for chlorophyll a'. Chlorophyll a contacts are provided by Met-683 and Tyr-691. Phylloquinone is bound at residue Trp-692. The helical transmembrane segment at 724-744 (AVGVAHYLLGGIVTTWAFFLA) threads the bilayer.

The protein belongs to the PsaA/PsaB family. The PsaA/B heterodimer binds the P700 chlorophyll special pair and subsequent electron acceptors. PSI consists of a core antenna complex that captures photons, and an electron transfer chain that converts photonic excitation into a charge separation. The eukaryotic PSI reaction center is composed of at least 11 subunits. Requires P700 is a chlorophyll a/chlorophyll a' dimer, A0 is one or more chlorophyll a, A1 is one or both phylloquinones and FX is a shared 4Fe-4S iron-sulfur center. as cofactor.

It localises to the plastid. Its subcellular location is the chloroplast thylakoid membrane. The enzyme catalyses reduced [plastocyanin] + hnu + oxidized [2Fe-2S]-[ferredoxin] = oxidized [plastocyanin] + reduced [2Fe-2S]-[ferredoxin]. Functionally, psaA and PsaB bind P700, the primary electron donor of photosystem I (PSI), as well as the electron acceptors A0, A1 and FX. PSI is a plastocyanin-ferredoxin oxidoreductase, converting photonic excitation into a charge separation, which transfers an electron from the donor P700 chlorophyll pair to the spectroscopically characterized acceptors A0, A1, FX, FA and FB in turn. Oxidized P700 is reduced on the lumenal side of the thylakoid membrane by plastocyanin. This Pinus koraiensis (Korean pine) protein is Photosystem I P700 chlorophyll a apoprotein A1.